Reading from the N-terminus, the 324-residue chain is Glyoxylate/hydroxypyruvate reductase B (324 aa).

Catalysis depends on residues arginine 237 and glutamate 266. The active-site Proton donor is histidine 285.

The protein belongs to the D-isomer specific 2-hydroxyacid dehydrogenase family. GhrB subfamily. Homodimer.

It localises to the cytoplasm. The enzyme catalyses glycolate + NADP(+) = glyoxylate + NADPH + H(+). It carries out the reaction (R)-glycerate + NAD(+) = 3-hydroxypyruvate + NADH + H(+). The catalysed reaction is (R)-glycerate + NADP(+) = 3-hydroxypyruvate + NADPH + H(+). Catalyzes the NADPH-dependent reduction of glyoxylate and hydroxypyruvate into glycolate and glycerate, respectively. This chain is Glyoxylate/hydroxypyruvate reductase B, found in Citrobacter koseri (strain ATCC BAA-895 / CDC 4225-83 / SGSC4696).